The following is a 446-amino-acid chain: tRNA modification GTPase MnmE (446 aa).

Residues arginine 23, glutamate 81, and lysine 120 each coordinate (6S)-5-formyl-5,6,7,8-tetrahydrofolate. Residues glycine 216–aspartate 370 enclose the TrmE-type G domain. A K(+)-binding site is contributed by asparagine 226. Residues asparagine 226–serine 231, serine 245–threonine 251, and aspartate 270–glycine 273 each bind GTP. Serine 230 contacts Mg(2+). K(+) contacts are provided by serine 245, isoleucine 247, and threonine 250. Threonine 251 contacts Mg(2+). Lysine 446 serves as a coordination point for (6S)-5-formyl-5,6,7,8-tetrahydrofolate.

This sequence belongs to the TRAFAC class TrmE-Era-EngA-EngB-Septin-like GTPase superfamily. TrmE GTPase family. Homodimer. Heterotetramer of two MnmE and two MnmG subunits. K(+) serves as cofactor.

The protein localises to the cytoplasm. Functionally, exhibits a very high intrinsic GTPase hydrolysis rate. Involved in the addition of a carboxymethylaminomethyl (cmnm) group at the wobble position (U34) of certain tRNAs, forming tRNA-cmnm(5)s(2)U34. This Aliarcobacter butzleri (strain RM4018) (Arcobacter butzleri) protein is tRNA modification GTPase MnmE.